A 171-amino-acid chain; its full sequence is Co-chaperone protein HscB (171 aa).

Residues 2–74 (DYFTLFGLPA…LMRAEYLLSL (73 aa)) form the J domain.

The protein belongs to the HscB family. Interacts with HscA and stimulates its ATPase activity. Interacts with IscU.

In terms of biological role, co-chaperone involved in the maturation of iron-sulfur cluster-containing proteins. Seems to help targeting proteins to be folded toward HscA. The polypeptide is Co-chaperone protein HscB (Shigella flexneri serotype 5b (strain 8401)).